We begin with the raw amino-acid sequence, 307 residues long: Oxygen-dependent coproporphyrinogen-III oxidase (307 aa).

Substrate is bound at residue serine 94. A divalent metal cation contacts are provided by histidine 98 and histidine 108. Catalysis depends on histidine 108, which acts as the Proton donor. 110–112 (NVR) provides a ligand contact to substrate. Histidine 147 and histidine 177 together coordinate a divalent metal cation. An important for dimerization region spans residues 242–277 (YVEFNLVWDRGTLFGLQSGGRTESILMSMPPLAQWQ). 260-262 (GGR) provides a ligand contact to substrate.

Belongs to the aerobic coproporphyrinogen-III oxidase family. Homodimer. A divalent metal cation serves as cofactor.

It is found in the cytoplasm. The enzyme catalyses coproporphyrinogen III + O2 + 2 H(+) = protoporphyrinogen IX + 2 CO2 + 2 H2O. It participates in porphyrin-containing compound metabolism; protoporphyrin-IX biosynthesis; protoporphyrinogen-IX from coproporphyrinogen-III (O2 route): step 1/1. Its function is as follows. Involved in the heme biosynthesis. Catalyzes the aerobic oxidative decarboxylation of propionate groups of rings A and B of coproporphyrinogen-III to yield the vinyl groups in protoporphyrinogen-IX. The chain is Oxygen-dependent coproporphyrinogen-III oxidase from Chromohalobacter salexigens (strain ATCC BAA-138 / DSM 3043 / CIP 106854 / NCIMB 13768 / 1H11).